The sequence spans 273 residues: MRLASRFGRYNSIHRERPLTDDELMQFVPSVFSGDKHESRSERYTYIPTINIINKLRDEGFQPFFACQSRVRDLGRREYSKHMLRLRREGHINGQEVPEIILLNSHDGSSSYQMIPGIFRFVCTNGLVCGNNFGEIRVPHKGDIVGQVIEGAYEVLGVFDKVTDNMEAMKEIHLNSDEQHLFGRAALMVRYEDENKTPVTPEQIITPRRWEDKQNDLWTTWQRVQENMIKGGLSGRSASGKNTRTRAITGIDGDIRINKALWVIAEQFRKWKS.

Belongs to the UPF0380 family.

This is UPF0380 protein YubP (yubP) from Escherichia coli (strain K12).